The primary structure comprises 353 residues: Nicotinate-nucleotide--dimethylbenzimidazole phosphoribosyltransferase (353 aa).

Catalysis depends on Glu318, which acts as the Proton acceptor.

Belongs to the CobT family.

The enzyme catalyses 5,6-dimethylbenzimidazole + nicotinate beta-D-ribonucleotide = alpha-ribazole 5'-phosphate + nicotinate + H(+). The protein operates within nucleoside biosynthesis; alpha-ribazole biosynthesis; alpha-ribazole from 5,6-dimethylbenzimidazole: step 1/2. Functionally, catalyzes the synthesis of alpha-ribazole-5'-phosphate from nicotinate mononucleotide (NAMN) and 5,6-dimethylbenzimidazole (DMB). This is Nicotinate-nucleotide--dimethylbenzimidazole phosphoribosyltransferase from Geobacter metallireducens (strain ATCC 53774 / DSM 7210 / GS-15).